Consider the following 708-residue polypeptide: Glycine--tRNA ligase beta subunit (708 aa).

This sequence belongs to the class-II aminoacyl-tRNA synthetase family. As to quaternary structure, tetramer of two alpha and two beta subunits.

It localises to the cytoplasm. The catalysed reaction is tRNA(Gly) + glycine + ATP = glycyl-tRNA(Gly) + AMP + diphosphate. The protein is Glycine--tRNA ligase beta subunit of Methylobacillus flagellatus (strain ATCC 51484 / DSM 6875 / VKM B-1610 / KT).